The following is an 801-amino-acid chain: Phenylalanine--tRNA ligase beta subunit (801 aa).

The tRNA-binding domain occupies 39 to 148; that stretch reads AGSFTGVKVG…EDAVIGTDFR (110 aa). In terms of domain architecture, B5 spans 401–476; the sequence is PKPNKVALRR…RIYGYDNIPN (76 aa). Residues D454, D460, E463, and E464 each contribute to the Mg(2+) site. The FDX-ACB domain maps to 707–800; that stretch reads SKFPSNRRDI…VSEKFGAALR (94 aa).

The protein belongs to the phenylalanyl-tRNA synthetase beta subunit family. Type 1 subfamily. Tetramer of two alpha and two beta subunits. It depends on Mg(2+) as a cofactor.

It is found in the cytoplasm. It carries out the reaction tRNA(Phe) + L-phenylalanine + ATP = L-phenylalanyl-tRNA(Phe) + AMP + diphosphate + H(+). The polypeptide is Phenylalanine--tRNA ligase beta subunit (Vibrio parahaemolyticus serotype O3:K6 (strain RIMD 2210633)).